We begin with the raw amino-acid sequence, 84 residues long: Mu-conotoxin-like Cal 12.2a (84 aa).

The first 19 residues, 1–19 (MKLTCVLVVLLLVLPFGDL), serve as a signal peptide directing secretion. Residues 20–42 (ITTSNTEDNKRGATPWQNSLKAR) constitute a propeptide that is removed on maturation. Disulfide bonds link cysteine 45/cysteine 57, cysteine 52/cysteine 65, cysteine 59/cysteine 70, and cysteine 64/cysteine 76. Residue proline 48 is modified to 4-hydroxyproline. Tryptophan 72 carries the post-translational modification 6'-bromotryptophan. At proline 77 the chain carries 4-hydroxyproline. Tryptophan 81 is subject to 6'-bromotryptophan.

It belongs to the conotoxin O1 superfamily. Expressed by the venom duct.

It is found in the secreted. Mu-conotoxins block voltage-gated sodium channels. This toxin reversibly blocks voltage-gated sodium channel in cephalopods, with no alteration in the voltage dependence of sodium conductance or on the kinetics of inactivation. The chain is Mu-conotoxin-like Cal 12.2a from Californiconus californicus (California cone).